A 305-amino-acid polypeptide reads, in one-letter code: Glycine--tRNA ligase alpha subunit (305 aa).

It belongs to the class-II aminoacyl-tRNA synthetase family. As to quaternary structure, tetramer of two alpha and two beta subunits.

It is found in the cytoplasm. The enzyme catalyses tRNA(Gly) + glycine + ATP = glycyl-tRNA(Gly) + AMP + diphosphate. The sequence is that of Glycine--tRNA ligase alpha subunit from Vibrio vulnificus (strain CMCP6).